The chain runs to 410 residues: Structural protein ORF142 (410 aa).

Disordered regions lie at residues 1 to 24 and 156 to 197; these read MNQNHTLDNERNDDDEHSNNHVDT and PTST…VNIS. Positions 161–188 are enriched in acidic residues; that stretch reads DDNDNENRSDDDDDDDDYRNDREEVEDS.

It localises to the virion. In Trichoplusia ni ascovirus 2c (TnAV-2c), this protein is Structural protein ORF142.